The chain runs to 318 residues: Protoheme IX farnesyltransferase (318 aa).

The next 9 membrane-spanning stretches (helical) occupy residues 29 to 49 (IIPLLLITTAGSMWIAAQGQV), 51 to 71 (PVLLLVTMAGGTLAAASAQTI), 102 to 122 (LIFAIALAVLSFTLLTVFANL), 123 to 143 (LAASLALSGIIFYVLIYTHWL), 151 to 171 (IVIGGAAGAIPALVGWAAVTG), 179 to 199 (LIFAIVFLWTPPHFWALALMI), 219 to 239 (ATVKQIWYYTLITVVATLLLV), 241 to 261 (PLHSSGIVYAAIAISLGAVFI), and 280 to 300 (LFLYSISYMMLLCLGMVIDSL).

The protein belongs to the UbiA prenyltransferase family. Protoheme IX farnesyltransferase subfamily.

The protein resides in the cell inner membrane. It carries out the reaction heme b + (2E,6E)-farnesyl diphosphate + H2O = Fe(II)-heme o + diphosphate. It participates in porphyrin-containing compound metabolism; heme O biosynthesis; heme O from protoheme: step 1/1. Functionally, converts heme B (protoheme IX) to heme O by substitution of the vinyl group on carbon 2 of heme B porphyrin ring with a hydroxyethyl farnesyl side group. This is Protoheme IX farnesyltransferase from Trichormus variabilis (strain ATCC 29413 / PCC 7937) (Anabaena variabilis).